Here is a 201-residue protein sequence, read N- to C-terminus: UPF0301 protein Arad_1256 (201 aa).

Belongs to the UPF0301 (AlgH) family.

The chain is UPF0301 protein Arad_1256 from Rhizobium rhizogenes (strain K84 / ATCC BAA-868) (Agrobacterium radiobacter).